A 70-amino-acid chain; its full sequence is Conotoxin Mr3.8 (70 aa).

The first 24 residues, 1-24, serve as a signal peptide directing secretion; sequence MLKMGVVLFIFLVLFPLATLQLDA. Positions 25 to 54 are excised as a propeptide; sequence DQPVERYAKNKQLFNPHKRRGIILRAPGKR. 3 cysteine pairs are disulfide-bonded: Cys55/Cys67, Cys56/Cys68, and Cys61/Cys65.

It belongs to the conotoxin M superfamily. Expressed by the venom duct.

The protein resides in the secreted. In terms of biological role, in vitro, inhibits proliferation of the mice ovarian cancer cells ID8. The sequence is that of Conotoxin Mr3.8 from Conus marmoreus (Marble cone).